A 176-amino-acid chain; its full sequence is Late lactation protein (176 aa).

The N-terminal stretch at Met1 to Ala18 is a signal peptide. Residues Cys78 and Cys171 are joined by a disulfide bond.

This sequence belongs to the calycin superfamily. Lipocalin family. As to expression, mammary gland. Secreted in milk.

It localises to the secreted. Probably serves a role in the transport of a small ligand released during the hydrolysis of milk fat. This is Late lactation protein from Trichosurus vulpecula (Brush-tailed possum).